Here is a 323-residue protein sequence, read N- to C-terminus: Beta-ketoacyl-[acyl-carrier-protein] synthase III (323 aa).

Residues Cys-113 and His-250 contribute to the active site. Positions 251 to 255 (QANRR) are ACP-binding. Residue Asn-280 is part of the active site.

Belongs to the thiolase-like superfamily. FabH family. In terms of assembly, homodimer.

It localises to the cytoplasm. The enzyme catalyses malonyl-[ACP] + acetyl-CoA + H(+) = 3-oxobutanoyl-[ACP] + CO2 + CoA. It participates in lipid metabolism; fatty acid biosynthesis. In terms of biological role, catalyzes the condensation reaction of fatty acid synthesis by the addition to an acyl acceptor of two carbons from malonyl-ACP. Catalyzes the first condensation reaction which initiates fatty acid synthesis and may therefore play a role in governing the total rate of fatty acid production. Possesses both acetoacetyl-ACP synthase and acetyl transacylase activities. Its substrate specificity determines the biosynthesis of branched-chain and/or straight-chain of fatty acids. The polypeptide is Beta-ketoacyl-[acyl-carrier-protein] synthase III (Rhizobium johnstonii (strain DSM 114642 / LMG 32736 / 3841) (Rhizobium leguminosarum bv. viciae)).